The sequence spans 193 residues: MDIILLERIPRLGQMGDIVSVKDGYARNFLLPQGKALRANDANKKHFEKQRAQLKARNLERKSEAQKIAEKLDGKSFIVVRSAGETGQLYGSVSTRDISEIITSAGFSIGRNQIELNHPIKTIGLYLITLSLHPEVQISVVINVARSASEAQRQAEGETLTSAEAIYDIQEKPLAENQEEMNDNDANSINEQA.

Residues 155–193 (AEGETLTSAEAIYDIQEKPLAENQEEMNDNDANSINEQA) are disordered. Residues 184–193 (NDANSINEQA) show a composition bias toward polar residues.

Belongs to the bacterial ribosomal protein bL9 family.

Binds to the 23S rRNA. The chain is Large ribosomal subunit protein bL9 from Bartonella quintana (strain Toulouse) (Rochalimaea quintana).